A 327-amino-acid polypeptide reads, in one-letter code: Golgi to ER traffic protein 4 homolog (327 aa).

N-acetylalanine is present on alanine 2. The residue at position 12 (serine 12) is a Phosphoserine. The segment at 195-271 (FVAQAVLQFL…YQPSLRRDPM (77 aa)) is interacts with BAG6. Positions 307 to 327 (GSSEQEDGEESPSDGSPIELD) are disordered.

It belongs to the GET4 family. In terms of assembly, component of the BAG6/BAT3 complex, at least composed of BAG6, UBL4A and GET4/TRC35. Interacts with BAG6; the interaction is direct and localizes BAG6 to the cytosol. Interacts with GET3. In terms of processing, ubiquitinated by RNF12, leading to proteasomal degradation. When unassembled from BAG6; ubiquitinylation is modulated by BAG6 quality control role and effectuated by RNF126.

Its subcellular location is the cytoplasm. It is found in the cytosol. Functionally, as part of a cytosolic protein quality control complex, the BAG6/BAT3 complex, maintains misfolded and hydrophobic patches-containing proteins in a soluble state and participates in their proper delivery to the endoplasmic reticulum or alternatively can promote their sorting to the proteasome where they undergo degradation. The BAG6/BAT3 complex is involved in the post-translational delivery of tail-anchored/type II transmembrane proteins to the endoplasmic reticulum membrane. Recruited to ribosomes, it interacts with the transmembrane region of newly synthesized tail-anchored proteins and together with SGTA and ASNA1 mediates their delivery to the endoplasmic reticulum. Client proteins that cannot be properly delivered to the endoplasmic reticulum are ubiquitinated and sorted to the proteasome. Similarly, the BAG6/BAT3 complex also functions as a sorting platform for proteins of the secretory pathway that are mislocalized to the cytosol either delivering them to the proteasome for degradation or to the endoplasmic reticulum. The BAG6/BAT3 complex also plays a role in the endoplasmic reticulum-associated degradation (ERAD), a quality control mechanism that eliminates unwanted proteins of the endoplasmic reticulum through their retrotranslocation to the cytosol and their targeting to the proteasome. It maintains these retrotranslocated proteins in an unfolded yet soluble state condition in the cytosol to ensure their proper delivery to the proteasome. The protein is Golgi to ER traffic protein 4 homolog of Homo sapiens (Human).